A 355-amino-acid polypeptide reads, in one-letter code: Probable nitronate monooxygenase (355 aa).

Residues asparagine 71, glutamine 175, glycine 180, glycine 218, and 237–240 each bind FMN; that span reads QMGT.

This sequence belongs to the nitronate monooxygenase family. NMO class I subfamily. Requires FMN as cofactor.

It catalyses the reaction 3 propionate 3-nitronate + 3 O2 + H2O = 3 3-oxopropanoate + 2 nitrate + nitrite + H2O2 + 3 H(+). Its function is as follows. Nitronate monooxygenase that uses molecular oxygen to catalyze the oxidative denitrification of alkyl nitronates. Acts on propionate 3-nitronate (P3N), the presumed physiological substrate. Probably functions in the detoxification of P3N, a metabolic poison produced by plants and fungi as a defense mechanism. This Staphylococcus aureus (strain MSSA476) protein is Probable nitronate monooxygenase.